The chain runs to 237 residues: Ubiquinone biosynthesis O-methyltransferase (237 aa).

Arginine 38, glycine 58, aspartate 79, and methionine 124 together coordinate S-adenosyl-L-methionine.

This sequence belongs to the methyltransferase superfamily. UbiG/COQ3 family.

The enzyme catalyses a 3-demethylubiquinol + S-adenosyl-L-methionine = a ubiquinol + S-adenosyl-L-homocysteine + H(+). The catalysed reaction is a 3-(all-trans-polyprenyl)benzene-1,2-diol + S-adenosyl-L-methionine = a 2-methoxy-6-(all-trans-polyprenyl)phenol + S-adenosyl-L-homocysteine + H(+). It participates in cofactor biosynthesis; ubiquinone biosynthesis. In terms of biological role, O-methyltransferase that catalyzes the 2 O-methylation steps in the ubiquinone biosynthetic pathway. This Acinetobacter baumannii (strain AB307-0294) protein is Ubiquinone biosynthesis O-methyltransferase.